The following is a 458-amino-acid chain: Argininosuccinate lyase (458 aa).

Belongs to the lyase 1 family. Argininosuccinate lyase subfamily.

The protein resides in the cytoplasm. The enzyme catalyses 2-(N(omega)-L-arginino)succinate = fumarate + L-arginine. Its pathway is amino-acid biosynthesis; L-arginine biosynthesis; L-arginine from L-ornithine and carbamoyl phosphate: step 3/3. This Trichlorobacter lovleyi (strain ATCC BAA-1151 / DSM 17278 / SZ) (Geobacter lovleyi) protein is Argininosuccinate lyase.